Consider the following 227-residue polypeptide: Cytochrome c oxidase subunit 2 (227 aa).

The Mitochondrial intermembrane portion of the chain corresponds to 1–14 (MAYPFQLGLQDATS). The helical transmembrane segment at 15–45 (PIMEELTNFHDHTLMIVFLISSLVLYIISLM) threads the bilayer. Topologically, residues 46–59 (LTTKLTHTSTMDAQ) are mitochondrial matrix. The chain crosses the membrane as a helical span at residues 60 to 87 (EVETIWTILPAVILILIALPSLRILYMM). Residues 88-227 (DEINNPVLTV…HFENWSASMI (140 aa)) are Mitochondrial intermembrane-facing. Positions 161, 196, 198, 200, 204, and 207 each coordinate Cu cation. Residue glutamate 198 participates in Mg(2+) binding.

This sequence belongs to the cytochrome c oxidase subunit 2 family. Component of the cytochrome c oxidase (complex IV, CIV), a multisubunit enzyme composed of 14 subunits. The complex is composed of a catalytic core of 3 subunits MT-CO1, MT-CO2 and MT-CO3, encoded in the mitochondrial DNA, and 11 supernumerary subunits COX4I, COX5A, COX5B, COX6A, COX6B, COX6C, COX7A, COX7B, COX7C, COX8 and NDUFA4, which are encoded in the nuclear genome. The complex exists as a monomer or a dimer and forms supercomplexes (SCs) in the inner mitochondrial membrane with NADH-ubiquinone oxidoreductase (complex I, CI) and ubiquinol-cytochrome c oxidoreductase (cytochrome b-c1 complex, complex III, CIII), resulting in different assemblies (supercomplex SCI(1)III(2)IV(1) and megacomplex MCI(2)III(2)IV(2)). Found in a complex with TMEM177, COA6, COX18, COX20, SCO1 and SCO2. Interacts with TMEM177 in a COX20-dependent manner. Interacts with COX20. Interacts with COX16. Cu cation serves as cofactor.

Its subcellular location is the mitochondrion inner membrane. The catalysed reaction is 4 Fe(II)-[cytochrome c] + O2 + 8 H(+)(in) = 4 Fe(III)-[cytochrome c] + 2 H2O + 4 H(+)(out). Functionally, component of the cytochrome c oxidase, the last enzyme in the mitochondrial electron transport chain which drives oxidative phosphorylation. The respiratory chain contains 3 multisubunit complexes succinate dehydrogenase (complex II, CII), ubiquinol-cytochrome c oxidoreductase (cytochrome b-c1 complex, complex III, CIII) and cytochrome c oxidase (complex IV, CIV), that cooperate to transfer electrons derived from NADH and succinate to molecular oxygen, creating an electrochemical gradient over the inner membrane that drives transmembrane transport and the ATP synthase. Cytochrome c oxidase is the component of the respiratory chain that catalyzes the reduction of oxygen to water. Electrons originating from reduced cytochrome c in the intermembrane space (IMS) are transferred via the dinuclear copper A center (CU(A)) of subunit 2 and heme A of subunit 1 to the active site in subunit 1, a binuclear center (BNC) formed by heme A3 and copper B (CU(B)). The BNC reduces molecular oxygen to 2 water molecules using 4 electrons from cytochrome c in the IMS and 4 protons from the mitochondrial matrix. The chain is Cytochrome c oxidase subunit 2 (MT-CO2) from Batomys granti (Luzon hairy-tailed rat).